The sequence spans 120 residues: uncharacterized protein (120 aa).

Residues 1-19 (MKKIVCAVVALLLTLPAWA) form the signal peptide.

This is an uncharacterized protein from Salmonella typhimurium (strain LT2 / SGSC1412 / ATCC 700720).